The chain runs to 443 residues: Xaa-Pro dipeptidase (443 aa).

Aspartate 246, aspartate 257, histidine 339, glutamate 384, and glutamate 423 together coordinate Mn(2+).

This sequence belongs to the peptidase M24B family. Bacterial-type prolidase subfamily. The cofactor is Mn(2+).

The enzyme catalyses Xaa-L-Pro dipeptide + H2O = an L-alpha-amino acid + L-proline. Functionally, splits dipeptides with a prolyl residue in the C-terminal position. This Shigella dysenteriae serotype 1 (strain Sd197) protein is Xaa-Pro dipeptidase.